Reading from the N-terminus, the 396-residue chain is Ribosomal RNA large subunit methyltransferase I (396 aa).

The region spanning 2–81 (TVSIYLAKGR…EAIDKDFFVR (80 aa)) is the PUA domain.

This sequence belongs to the methyltransferase superfamily. RlmI family.

The protein resides in the cytoplasm. It carries out the reaction cytidine(1962) in 23S rRNA + S-adenosyl-L-methionine = 5-methylcytidine(1962) in 23S rRNA + S-adenosyl-L-homocysteine + H(+). Specifically methylates the cytosine at position 1962 (m5C1962) of 23S rRNA. This chain is Ribosomal RNA large subunit methyltransferase I, found in Aliivibrio fischeri (strain ATCC 700601 / ES114) (Vibrio fischeri).